The chain runs to 61 residues: Bowman-Birk type proteinase inhibitor B5 (61 aa).

Intrachain disulfides connect Cys5-Cys60, Cys6-Cys22, Cys9-Cys56, Cys12-Cys20, Cys29-Cys36, and Cys33-Cys48.

Belongs to the Bowman-Birk serine protease inhibitor family. Expressed in bulb (at protein level).

Serine protease inhibitor. Inhibits trypsin (Ki = 41 nM) and weakly inhibits chymotrypsin (Ki = 410 nM). Does not inhibit bacterial subtilisin. This Hyacinthus orientalis (Common hyacinth) protein is Bowman-Birk type proteinase inhibitor B5.